Reading from the N-terminus, the 241-residue chain is ATP synthase subunit a (241 aa).

5 consecutive transmembrane segments (helical) span residues 30-50, 91-111, 128-148, 193-213, and 214-234; these read GQVF…ISLG, FIGT…LIPW, INTT…AGLS, LVVG…VMFL, and GLFT…YYIG.

It belongs to the ATPase A chain family. F-type ATPases have 2 components, CF(1) - the catalytic core - and CF(0) - the membrane proton channel. CF(1) has five subunits: alpha(3), beta(3), gamma(1), delta(1), epsilon(1). CF(0) has four main subunits: a, b, b' and c.

The protein resides in the cellular thylakoid membrane. Its function is as follows. Key component of the proton channel; it plays a direct role in the translocation of protons across the membrane. This is ATP synthase subunit a from Prochlorococcus marinus (strain MIT 9301).